Here is a 352-residue protein sequence, read N- to C-terminus: C-C chemokine receptor type 5 (352 aa).

At 1-30 the chain is on the extracellular side; sequence MDYQVSSPTYDIDYDTSEPCQKINVKQIAA. Sulfotyrosine is present on Y3. O-linked (GalNAc...) serine glycosylation is found at S6 and S7. A sulfotyrosine mark is found at Y10 and Y14. Intrachain disulfides connect C20–C269 and C101–C178. A helical membrane pass occupies residues 31–58; that stretch reads RLLPPLYSLVFIFGFVGNMLVILVLINC. Topologically, residues 59 to 68 are cytoplasmic; the sequence is KRLKSMTDIY. Residues 69 to 89 form a helical membrane-spanning segment; it reads LLNLAISDLFFLLTVPFWAHY. Topologically, residues 90-102 are extracellular; it reads AAAQWDFGNTMCQ. Residues 103 to 124 traverse the membrane as a helical segment; that stretch reads LLTGLYFIGFFSGIFFIILLTI. Topologically, residues 125 to 141 are cytoplasmic; sequence DRYLAIVHAVFALKART. A helical membrane pass occupies residues 142-166; sequence VTFGVVTSVITWVVAVFASLPGIIF. Residues 167 to 198 are Extracellular-facing; the sequence is TRSQKEGLHYTCSSHFPYSQYQFWKNFQTLKI. A helical transmembrane segment spans residues 199–218; sequence VILGLVLPLLVMVICYSGIL. The Cytoplasmic segment spans residues 219-235; it reads KTLLRCRNEKKRHRAVR. The helical transmembrane segment at 236 to 260 threads the bilayer; the sequence is LIFTIMIVYFLFWAPYNIVLLLNTF. Residues 261-277 are Extracellular-facing; that stretch reads QEFFGLNNCSSSNRLDQ. Residues 278 to 301 form a helical membrane-spanning segment; the sequence is AMQVTETLGMTHCCINPIIYAFVG. Residues 302–352 lie on the Cytoplasmic side of the membrane; sequence EKFRNYLLVFFQKHIAKHFCKCCSIFQQEAPERASSVYTRSTGEQEISVGL. Residues C321, C323, and C324 are each lipidated (S-palmitoyl cysteine). 4 positions are modified to phosphoserine; by BARK1: S336, S337, S342, and S349.

It belongs to the G-protein coupled receptor 1 family. As to quaternary structure, interacts with PRAF2. Efficient ligand binding to CCL3/MIP-1alpha and CCL4/MIP-1beta requires sulfation, O-glycosylation and sialic acid modifications. Glycosylation on Ser-6 is required for efficient binding of CCL4. Interacts with GRK2. Interacts with ARRB1 and ARRB2. Interacts with CNIH4. Interacts with S100A4; this interaction stimulates T-lymphocyte chemotaxis. Sulfated on at least 2 of the N-terminal tyrosines. Sulfation is required for efficient binding of the chemokines, CCL3 and CCL4. In terms of processing, palmitoylation in the C-terminal is important for cell surface expression. Post-translationally, phosphorylation on serine residues in the C-terminal is stimulated by binding CC chemokines especially by APO-RANTES. O-glycosylated, but not N-glycosylated. Ser-6 appears to be the major site even if Ser-7 may be also O-glycosylated. Also sialylated glycans present which contribute to chemokine binding. Thr-16 and Ser-17 may also be glycosylated and, if so, with small moieties such as a T-antigen.

The protein resides in the cell membrane. Its function is as follows. Receptor for a number of inflammatory CC-chemokines including CCL3/MIP-1-alpha, CCL4/MIP-1-beta and RANTES and subsequently transduces a signal by increasing the intracellular calcium ion level. May play a role in the control of granulocytic lineage proliferation or differentiation. Participates in T-lymphocyte migration to the infection site by acting as a chemotactic receptor. This is C-C chemokine receptor type 5 (CCR5) from Nomascus leucogenys (Northern white-cheeked gibbon).